Consider the following 855-residue polypeptide: Potassium transporter 13 (855 aa).

The interval Met1–Asn67 is disordered. The Cytoplasmic portion of the chain corresponds to Met1–Lys105. Residues Glu36–Tyr51 show a composition bias toward acidic residues. Residues Leu106–Tyr126 traverse the membrane as a helical segment. The Extracellular portion of the chain corresponds to Thr127–Asp142. Residues Ile143–Val163 form a helical membrane-spanning segment. Over His164–Lys233 the chain is Cytoplasmic. The helical transmembrane segment at Leu234–Pro254 threads the bilayer. Topologically, residues Ala255–Gly268 are extracellular. Residues Val269–Phe289 form a helical membrane-spanning segment. The Cytoplasmic segment spans residues Ser290–Lys298. Residues Leu299–Ile319 traverse the membrane as a helical segment. At Tyr320–Ser346 the chain is on the extracellular side. A helical transmembrane segment spans residues Val347–Phe367. Over Ala368–Gln379 the chain is Cytoplasmic. A helical membrane pass occupies residues Leu380–Tyr400. Over Leu401–Ser415 the chain is Extracellular. Residue Asn404 is glycosylated (N-linked (GlcNAc...) asparagine). The chain crosses the membrane as a helical span at residues Val416–Ser436. At Arg437–Lys467 the chain is on the cytoplasmic side. A helical transmembrane segment spans residues Phe468–Val488. Residues Val489–Gly503 lie on the Extracellular side of the membrane. The helical transmembrane segment at Ile504–Ile524 threads the bilayer. The Cytoplasmic portion of the chain corresponds to Trp525 to Asn528. Residues Ile529–Ser549 form a helical membrane-spanning segment. At Val550–Ser553 the chain is on the extracellular side. The helical transmembrane segment at Val554–Val574 threads the bilayer. At Trp575–Val855 the chain is on the cytoplasmic side. Ser766 is modified (phosphoserine).

It belongs to the HAK/KUP transporter (TC 2.A.72.3) family.

The protein localises to the cell membrane. Probable potassium transporter. The sequence is that of Potassium transporter 13 (POT13) from Arabidopsis thaliana (Mouse-ear cress).